Reading from the N-terminus, the 295-residue chain is ATP synthase gamma chain (295 aa).

The protein belongs to the ATPase gamma chain family. F-type ATPases have 2 components, CF(1) - the catalytic core - and CF(0) - the membrane proton channel. CF(1) has five subunits: alpha(3), beta(3), gamma(1), delta(1), epsilon(1). CF(0) has three main subunits: a, b and c.

It is found in the cell inner membrane. In terms of biological role, produces ATP from ADP in the presence of a proton gradient across the membrane. The gamma chain is believed to be important in regulating ATPase activity and the flow of protons through the CF(0) complex. The sequence is that of ATP synthase gamma chain from Paraburkholderia phymatum (strain DSM 17167 / CIP 108236 / LMG 21445 / STM815) (Burkholderia phymatum).